A 634-amino-acid polypeptide reads, in one-letter code: Tyrosine-protein kinase transforming protein erbB (634 aa).

Residues 132–399 form the Protein kinase domain; that stretch reads FKKVKVLGSG…KMARDPPRYL (268 aa). ATP-binding positions include 138–146 and K165; that span reads LGSGAFGTV. D257 (proton acceptor) is an active-site residue.

Belongs to the protein kinase superfamily. Tyr protein kinase family. EGF receptor subfamily.

The catalysed reaction is L-tyrosyl-[protein] + ATP = O-phospho-L-tyrosyl-[protein] + ADP + H(+). In Avian leukosis virus (ALV), this protein is Tyrosine-protein kinase transforming protein erbB (V-ERBB).